The primary structure comprises 741 residues: Multifunctional procollagen lysine hydroxylase and glycosyltransferase LH3 (741 aa).

A signal peptide spans 1–27; sequence MAASVPEPRLLLLLLLLLPPLPPVTSA. The interval 28-293 is required for glycosyltransferase activity; sequence SDRPRGANPV…FCNLNRRTLP (266 aa). 47 to 49 is a binding site for UDP; it reads VAT. N-linked (GlcNAc...) asparagine glycosylation is present at Asn-66. Asp-115, Asp-118, and His-256 together coordinate Mn(2+). 115-117 contributes to the UDP binding site; the sequence is DSY. Position 259-262 (259-262) interacts with UDP; it reads GPTK. 2 cysteine pairs are disulfide-bonded: Cys-282/Cys-285 and Cys-382/Cys-388. The interval 298-523 is accessory region; the sequence is PPRVLLAVFV…EFGRLLSTSH (226 aa). A glycan (N-linked (GlcNAc...) asparagine) is linked at Asn-551. A disulfide bridge connects residues Cys-566 and Cys-701. Residues Arg-602 and Tyr-659 each contribute to the 2-oxoglutarate site. In terms of domain architecture, Fe2OG dioxygenase spans 650 to 741; the sequence is RAVMNFVVRY…RYIMVSFVDP (92 aa). Residues His-670 and Asp-672 each contribute to the Fe cation site. Positions 675-718 are important for dimerization; sequence TFTLNVALNHKGVDYEGGGCRFLRYDCRVSSPRKGWALLHPGRL. Asn-679 is a binding site for 2-oxoglutarate. His-722 is a binding site for Fe cation. 2-oxoglutarate is bound at residue Arg-732.

Homodimer. It depends on Fe(2+) as a cofactor. L-ascorbate serves as cofactor. The cofactor is Mn(2+). As to expression, detected in heart and bone.

Its subcellular location is the rough endoplasmic reticulum. The protein resides in the endoplasmic reticulum lumen. It is found in the endoplasmic reticulum membrane. It localises to the secreted. The protein localises to the extracellular space. It catalyses the reaction L-lysyl-[collagen] + 2-oxoglutarate + O2 = (5R)-5-hydroxy-L-lysyl-[collagen] + succinate + CO2. It carries out the reaction (5R)-5-hydroxy-L-lysyl-[collagen] + UDP-alpha-D-galactose = (5R)-5-O-(beta-D-galactosyl)-5-hydroxy-L-lysyl-[collagen] + UDP + H(+). The catalysed reaction is (5R)-5-O-(beta-D-galactosyl)-5-hydroxy-L-lysyl-[collagen] + UDP-alpha-D-glucose = (5R)-5-O-[alpha-D-glucosyl-(1-&gt;2)-beta-D-galactosyl]-5-hydroxy-L-lysyl-[collagen] + UDP + H(+). Functionally, multifunctional enzyme that catalyzes a series of post-translational modifications on Lys residues in procollagen. Plays a redundant role in catalyzing the formation of hydroxylysine residues in -Xaa-Lys-Gly- sequences in collagens. Plays a redundant role in catalyzing the transfer of galactose onto hydroxylysine groups, giving rise to galactosyl 5-hydroxylysine. Has an essential role by catalyzing the subsequent transfer of glucose moieties, giving rise to 1,2-glucosylgalactosyl-5-hydroxylysine residues. Catalyzes hydroxylation and glycosylation of Lys residues in the MBL1 collagen-like domain, giving rise to hydroxylysine and 1,2-glucosylgalactosyl-5-hydroxylysine residues. Catalyzes hydroxylation and glycosylation of Lys residues in the ADIPOQ collagen-like domain, giving rise to hydroxylysine and 1,2-glucosylgalactosyl-5-hydroxylysine residues. Essential for normal biosynthesis and secretion of type IV collagens. Essential for normal formation of basement membranes. The protein is Multifunctional procollagen lysine hydroxylase and glycosyltransferase LH3 (Plod3) of Rattus norvegicus (Rat).